The primary structure comprises 1024 residues: Beta-galactosidase (1024 aa).

Asparagine 103 and aspartate 202 together coordinate substrate. Na(+) is bound at residue aspartate 202. Residues glutamate 417, histidine 419, and glutamate 462 each coordinate Mg(2+). Residues glutamate 462 and 538–541 (EYAH) contribute to the substrate site. Glutamate 462 functions as the Proton donor in the catalytic mechanism. Glutamate 538 acts as the Nucleophile in catalysis. Mg(2+) is bound at residue asparagine 598. Na(+) is bound by residues phenylalanine 602 and asparagine 605. Positions 605 and 1000 each coordinate substrate.

Belongs to the glycosyl hydrolase 2 family. In terms of assembly, homotetramer. It depends on Mg(2+) as a cofactor. Na(+) is required as a cofactor.

It catalyses the reaction Hydrolysis of terminal non-reducing beta-D-galactose residues in beta-D-galactosides.. The protein is Beta-galactosidase of Klebsiella pneumoniae.